Here is a 226-residue protein sequence, read N- to C-terminus: ATP-dependent dethiobiotin synthetase BioD (226 aa).

D13–L18 is a binding site for ATP. A Mg(2+)-binding site is contributed by T17. The active site involves K38. ATP-binding positions include D55, E117–G120, N177–R178, P206–V208, and E213. Positions 55 and 117 each coordinate Mg(2+).

The protein belongs to the dethiobiotin synthetase family. In terms of assembly, homodimer. Requires Mg(2+) as cofactor.

Its subcellular location is the cytoplasm. The catalysed reaction is (7R,8S)-7,8-diammoniononanoate + CO2 + ATP = (4R,5S)-dethiobiotin + ADP + phosphate + 3 H(+). Its pathway is cofactor biosynthesis; biotin biosynthesis; biotin from 7,8-diaminononanoate: step 1/2. Catalyzes a mechanistically unusual reaction, the ATP-dependent insertion of CO2 between the N7 and N8 nitrogen atoms of 7,8-diaminopelargonic acid (DAPA, also called 7,8-diammoniononanoate) to form a ureido ring. The chain is ATP-dependent dethiobiotin synthetase BioD from Aeromonas salmonicida (strain A449).